The chain runs to 295 residues: Glycine N-phenylacetyltransferase (295 aa).

K43 bears the N6-acetyllysine mark. K48 carries the post-translational modification N6-acetyllysine; alternate. K48 carries the N6-succinyllysine; alternate modification. K80 carries the N6-acetyllysine modification. The residue at position 182 (K182) is an N6-acetyllysine; alternate. K182 bears the N6-succinyllysine; alternate mark.

It belongs to the glycine N-acyltransferase family.

It localises to the mitochondrion. It carries out the reaction phenylacetyl-CoA + glycine = phenylacetylglycine + CoA + H(+). Mitochondrial acyltransferase which transfers the acyl group to the N-terminus of glycine. Can conjugate a multitude of substrates to form a variety of N-acylglycines. Catalyzes the conjugation of arylacetic acids with glycine but does not have activity towards any alkyl-CoA. In Bos taurus (Bovine), this protein is Glycine N-phenylacetyltransferase.